The chain runs to 249 residues: Phycobilisome 27.9 kDa linker polypeptide, phycoerythrin-associated, rod (249 aa).

Residues 2-166 (ASQTILELWP…LDRGPAQIDS (165 aa)) enclose the PBS-linker domain. The region spanning 198–248 (EKRFKILVQGSKFDSPRRISTTEYIVPASKMTPQIQRINRTSGKIVSITEI) is the CpcD-like domain.

Belongs to the phycobilisome linker protein family. The phycobilisome is a hemidiscoidal structure that is composed of two distinct substructures: a core complex and six rods radiating from the core.

The protein localises to the cellular thylakoid membrane. Its function is as follows. Rod linker protein, associated with phycoerythrin. Linker polypeptides determine the state of aggregation and the location of the disk-shaped phycobiliprotein units within the phycobilisome and modulate their spectroscopic properties in order to mediate a directed and optimal energy transfer. In Microchaete diplosiphon (Fremyella diplosiphon), this protein is Phycobilisome 27.9 kDa linker polypeptide, phycoerythrin-associated, rod (cpeD).